The following is a 196-amino-acid chain: MSRYRGPRLKKIRRLGALPGLTRKTPKSGSNLKKKFHSGKKEQYRIRLQEKQKLRFHYGLTERQLLRYVHIAGKAKRSTGQVLLQLLEMRLDNILFRLGMASTIPGARQLVNHRHILVNGRIVDIPSFRCKPRDIITTKDNQRSKRLIQNSIASSDPGKLPKHLTIDTLQYKGLVKKILDRKWVGLKINELLVVEY.

Residues 17–36 (ALPGLTRKTPKSGSNLKKKF) form a disordered region. In terms of domain architecture, S4 RNA-binding spans 89–150 (MRLDNILFRL…NQRSKRLIQN (62 aa)).

This sequence belongs to the universal ribosomal protein uS4 family. As to quaternary structure, part of the 30S ribosomal subunit. Contacts protein S5. The interaction surface between S4 and S5 is involved in control of translational fidelity.

The protein localises to the plastid. Its subcellular location is the chloroplast. One of the primary rRNA binding proteins, it binds directly to 16S rRNA where it nucleates assembly of the body of the 30S subunit. Functionally, with S5 and S12 plays an important role in translational accuracy. This is Small ribosomal subunit protein uS4c (rps4) from Phyllostachys flexuosa (Drooping timber bamboo).